We begin with the raw amino-acid sequence, 389 residues long: Alkanesulfonate monooxygenase (389 aa).

The protein belongs to the SsuD family.

It catalyses the reaction an alkanesulfonate + FMNH2 + O2 = an aldehyde + FMN + sulfite + H2O + 2 H(+). Functionally, catalyzes the desulfonation of aliphatic sulfonates. The protein is Alkanesulfonate monooxygenase of Rhizobium etli (strain CIAT 652).